A 315-amino-acid chain; its full sequence is Ester hydrolase C11orf54 (315 aa).

Histidine 266, histidine 268, and histidine 278 together coordinate Zn(2+).

Monomer. Requires Zn(2+) as cofactor.

It is found in the nucleus. It localises to the cytoplasm. In terms of biological role, exhibits ester hydrolase activity on the substrate p-nitrophenyl acetate, in vitro. Regulates DNA damage and repair by regulating HIF1A degradation via chaperone-mediated autophagy (CMA). Its function is as follows. Probably non-functional. This chain is Ester hydrolase C11orf54 (C11orf54), found in Homo sapiens (Human).